Here is a 247-residue protein sequence, read N- to C-terminus: Retbindin (247 aa).

The signal sequence occupies residues 1 to 31 (MAHEGHSQHSGLVWALRPILAWIFLVACGWS). Disulfide bonds link cysteine 99/cysteine 169, cysteine 106/cysteine 146, cysteine 139/cysteine 183, and cysteine 152/cysteine 165.

Belongs to the folate receptor family. Post-translationally, not N-glycosylated. In terms of tissue distribution, expressed in the peripheral retina where it localizes to the inter-photoreceptor matrix (at protein level). May be produced by rod photoreceptors (at protein level).

The protein localises to the secreted. It is found in the extracellular space. It localises to the extracellular matrix. Its subcellular location is the interphotoreceptor matrix. The protein resides in the cell membrane. Riboflavin-binding protein which might have a role in retinal flavin transport. This is Retbindin (Rtbdn) from Mus musculus (Mouse).